Consider the following 35-residue polypeptide: Mu-theraphotoxin-Pn3b (35 aa).

3 disulfides stabilise this stretch: cysteine 2-cysteine 16, cysteine 9-cysteine 21, and cysteine 15-cysteine 28.

Belongs to the neurotoxin 10 (Hwtx-1) family. 28 (Jztx-11) subfamily. In terms of tissue distribution, expressed by the venom gland.

The protein resides in the secreted. Functionally, gating-modifier toxin that targets voltage-gated sodium channels with a preferential activity on Nav1.7/SCN9A. On Nav1.7/SCN9A, the toxin acts by shifting the voltage-dependence of activation to more depolarized potentials, whereas it does not cause significant effect on the voltage-dependence of activation on other sodium channels. Minor effects are observed on the voltage-dependence of steady-state fast inactivation for all sodium channels tested (Nav1.1/SCN1A-Nav1.8/SCN10A). By testing the toxin on channel chimera, it has been shown to interact with the S3-S4 linkers in DII and DIV domains of Nav1.7/SCN9A. In vivo, the toxin dose-dependently reduces OD1-induced spontaneous pain behaviors. This chain is Mu-theraphotoxin-Pn3b, found in Pamphobeteus nigricolor (Giant blue bloom tarantula).